The sequence spans 431 residues: Adenylosuccinate synthetase (431 aa).

Residues 12–18 and 40–42 each bind GTP; these read GDEGKGK and GHS. Asp-13 acts as the Proton acceptor in catalysis. The Mg(2+) site is built by Asp-13 and Gly-40. Residues 13-16 and 38-41 each bind IMP; these read DEGK and NAGH. Residue His-41 is the Proton donor of the active site. A disordered region spans residues 114-133; the sequence is QQQERDRSKNGEKIGTTNKG. Residues 115–125 show a composition bias toward basic and acidic residues; that stretch reads QQERDRSKNGE. Positions 130, 144, 225, 240, and 304 each coordinate IMP. 300–306 provides a ligand contact to substrate; that stretch reads TVTKRPR. Residues Arg-306, 332–334, and 414–416 contribute to the GTP site; these read CLD and SIG.

The protein belongs to the adenylosuccinate synthetase family. In terms of assembly, homodimer. It depends on Mg(2+) as a cofactor.

Its subcellular location is the cytoplasm. The catalysed reaction is IMP + L-aspartate + GTP = N(6)-(1,2-dicarboxyethyl)-AMP + GDP + phosphate + 2 H(+). The protein operates within purine metabolism; AMP biosynthesis via de novo pathway; AMP from IMP: step 1/2. Plays an important role in the de novo pathway of purine nucleotide biosynthesis. Catalyzes the first committed step in the biosynthesis of AMP from IMP. The protein is Adenylosuccinate synthetase of Pediococcus pentosaceus (strain ATCC 25745 / CCUG 21536 / LMG 10740 / 183-1w).